The primary structure comprises 1367 residues: Mediator of RNA polymerase II transcription subunit 23 (1367 aa).

Positions 1343 to 1367 (PPQALSSGSPAPQANQVPTALPVTQ) are disordered. Residues 1346–1367 (ALSSGSPAPQANQVPTALPVTQ) show a composition bias toward polar residues.

Belongs to the Mediator complex subunit 23 family. Component of the Mediator complex, which is composed of MED1, MED4, MED6, MED7, MED8, MED9, MED10, MED11, MED12, MED13, MED13L, MED14, MED15, MED16, MED17, MED18, MED19, MED20, MED21, MED22, MED23, MED24, MED25, MED26, MED27, MED29, MED30, MED31, CCNC, CDK8 and CDC2L6/CDK11. The MED12, MED13, CCNC and CDK8 subunits form a distinct module termed the CDK8 module. Mediator containing the CDK8 module is less active than Mediator lacking this module in supporting transcriptional activation. Individual preparations of the Mediator complex lacking one or more distinct subunits have been variously termed ARC, CRSP, DRIP, PC2, SMCC and TRAP. Interacts with CDK8, CEBPB, CTNNB1, ELK1 and GLI3. Interacts with the adenovirus E1A protein.

It is found in the nucleus. Functionally, component of the Mediator complex, a coactivator involved in the regulated transcription of nearly all RNA polymerase II-dependent genes. Mediator functions as a bridge to convey information from gene-specific regulatory proteins to the basal RNA polymerase II transcription machinery. Mediator is recruited to promoters by direct interactions with regulatory proteins and serves as a scaffold for the assembly of a functional pre-initiation complex with RNA polymerase II and the general transcription factors. Also required for transcriptional activation subsequent to the assembly of the pre-initiation complex. Required for transcriptional activation by adenovirus E1A protein. Required for ELK1-dependent transcriptional activation in response to activated Ras signaling. This chain is Mediator of RNA polymerase II transcription subunit 23 (Med23), found in Rattus norvegicus (Rat).